The sequence spans 191 residues: Fe/S biogenesis protein NfuA (191 aa).

2 residues coordinate [4Fe-4S] cluster: C149 and C152.

This sequence belongs to the NfuA family. Homodimer. The cofactor is [4Fe-4S] cluster.

Its function is as follows. Involved in iron-sulfur cluster biogenesis. Binds a 4Fe-4S cluster, can transfer this cluster to apoproteins, and thereby intervenes in the maturation of Fe/S proteins. Could also act as a scaffold/chaperone for damaged Fe/S proteins. The sequence is that of Fe/S biogenesis protein NfuA from Photorhabdus laumondii subsp. laumondii (strain DSM 15139 / CIP 105565 / TT01) (Photorhabdus luminescens subsp. laumondii).